A 389-amino-acid polypeptide reads, in one-letter code: MARSNFLFTSESVSEGHPDKVCDRISDAVVDLYLAADPFARVACETLTTTNKIVLAGEVRGPASITKEKVEETARNAVKAIGYEQEGFHWKNADVEVLLHAQSADIAQGVDAAGNKDEGAGDQGIMFGYACTETDVLMPSPIYYAHRILKRMAEDRHSGKRPEFEPDAKSQVTMKYENGKPVGVTSVVVSTQHKANVSQADLRELVRDAVKSVLPNGWFPPEEEFYVNPTGNFVIGGPDGDAGLTGRKIIVDTYGGWAPHGGGAFSGKDPTKVDRSAAYASRYLAKNVVAAGLSERCTIQLSYAIGVSKPLSIYCDLHGTGKVEEDAIEKAVAKCMDLSPRGIREHLQLNRPIYERTAAYGHFGRVPESDGGFSWEKTDLADKLKAEIR.

His17 contacts ATP. A Mg(2+)-binding site is contributed by Asp19. Glu45 contributes to the K(+) binding site. L-methionine contacts are provided by Glu58 and Gln102. Residues 102–112 (QSADIAQGVDA) form a flexible loop region. Residues 167 to 169 (DAK), Asp241, 247 to 248 (RK), Ala264, and Lys268 each bind ATP. Asp241 contributes to the L-methionine binding site. Lys272 is an L-methionine binding site.

It belongs to the AdoMet synthase family. Homotetramer; dimer of dimers. The cofactor is Mg(2+). Requires K(+) as cofactor.

The protein resides in the cytoplasm. It carries out the reaction L-methionine + ATP + H2O = S-adenosyl-L-methionine + phosphate + diphosphate. It functions in the pathway amino-acid biosynthesis; S-adenosyl-L-methionine biosynthesis; S-adenosyl-L-methionine from L-methionine: step 1/1. Functionally, catalyzes the formation of S-adenosylmethionine (AdoMet) from methionine and ATP. The overall synthetic reaction is composed of two sequential steps, AdoMet formation and the subsequent tripolyphosphate hydrolysis which occurs prior to release of AdoMet from the enzyme. This chain is S-adenosylmethionine synthase, found in Parvibaculum lavamentivorans (strain DS-1 / DSM 13023 / NCIMB 13966).